An 87-amino-acid chain; its full sequence is Large ribosomal subunit protein bL27 (87 aa).

Belongs to the bacterial ribosomal protein bL27 family.

The sequence is that of Large ribosomal subunit protein bL27 from Phocaeicola vulgatus (strain ATCC 8482 / DSM 1447 / JCM 5826 / CCUG 4940 / NBRC 14291 / NCTC 11154) (Bacteroides vulgatus).